The primary structure comprises 267 residues: Acyl-[acyl-carrier-protein]--UDP-N-acetylglucosamine O-acyltransferase (267 aa).

The protein belongs to the transferase hexapeptide repeat family. LpxA subfamily. Homotrimer.

Its subcellular location is the cytoplasm. The catalysed reaction is a (3R)-hydroxyacyl-[ACP] + UDP-N-acetyl-alpha-D-glucosamine = a UDP-3-O-[(3R)-3-hydroxyacyl]-N-acetyl-alpha-D-glucosamine + holo-[ACP]. It participates in glycolipid biosynthesis; lipid IV(A) biosynthesis; lipid IV(A) from (3R)-3-hydroxytetradecanoyl-[acyl-carrier-protein] and UDP-N-acetyl-alpha-D-glucosamine: step 1/6. Involved in the biosynthesis of lipid A, a phosphorylated glycolipid that anchors the lipopolysaccharide to the outer membrane of the cell. In Cupriavidus necator (strain ATCC 17699 / DSM 428 / KCTC 22496 / NCIMB 10442 / H16 / Stanier 337) (Ralstonia eutropha), this protein is Acyl-[acyl-carrier-protein]--UDP-N-acetylglucosamine O-acyltransferase.